Consider the following 604-residue polypeptide: Replication protein E1 (604 aa).

Residues 79 to 81 carry the Nuclear localization signal motif; the sequence is KRK. 2 positions are modified to phosphoserine; by host: S84 and S92. The DNA-binding region stretch occupies residues 144–307; that stretch reads EGDIGLGTVR…TMIQHQTADT (164 aa). The SF3 helicase domain maps to 406–556; the sequence is LNFIMFLDKF…FPFDSDNKPL (151 aa). Position 432–439 (432–439) interacts with ATP; that stretch reads GPPDTGKS. Residue K513 forms a Glycyl lysine isopeptide (Lys-Gly) (interchain with G-Cter in SUMO) linkage.

The protein belongs to the papillomaviridae E1 protein family. As to quaternary structure, can form hexamers. Interacts with E2 protein; this interaction increases E1 DNA binding specificity. Interacts with host DNA polymerase subunit POLA2. Interacts with host single stranded DNA-binding protein RPA1. Interacts with host TOP1; this interaction stimulates the enzymatic activity of TOP1. Phosphorylated. Post-translationally, sumoylated.

It is found in the host nucleus. The enzyme catalyses Couples ATP hydrolysis with the unwinding of duplex DNA by translocating in the 3'-5' direction.. The catalysed reaction is ATP + H2O = ADP + phosphate + H(+). In terms of biological role, ATP-dependent DNA 3'-5' helicase required for initiation of viral DNA replication. It forms a complex with the viral E2 protein. The E1-E2 complex binds to the replication origin which contains binding sites for both proteins. During the initial step, a dimer of E1 interacts with a dimer of protein E2 leading to a complex that binds the viral origin of replication with high specificity. Then, a second dimer of E1 displaces the E2 dimer in an ATP-dependent manner to form the E1 tetramer. Following this, two E1 monomers are added to each half of the site, which results in the formation of two E1 trimers on the viral ori. Subsequently, two hexamers will be created. The double hexamer acts as a bi-directional helicase machinery and unwinds the viral DNA and then recruits the host DNA polymerase to start replication. This Homo sapiens (Human) protein is Replication protein E1.